A 475-amino-acid chain; its full sequence is Ribulose bisphosphate carboxylase large chain (475 aa).

The propeptide occupies 1–2; that stretch reads MS. Pro3 bears the N-acetylproline mark. Lys14 carries the N6,N6,N6-trimethyllysine modification. Residues Asn123 and Thr173 each contribute to the substrate site. The active-site Proton acceptor is the Lys175. Position 177 (Lys177) interacts with substrate. Mg(2+) contacts are provided by Lys201, Asp203, and Glu204. At Lys201 the chain carries N6-carboxylysine. The active-site Proton acceptor is His294. Arg295, His327, and Ser379 together coordinate substrate.

It belongs to the RuBisCO large chain family. Type I subfamily. As to quaternary structure, heterohexadecamer of 8 large chains and 8 small chains; disulfide-linked. The disulfide link is formed within the large subunit homodimers. Mg(2+) serves as cofactor. In terms of processing, the disulfide bond which can form in the large chain dimeric partners within the hexadecamer appears to be associated with oxidative stress and protein turnover.

The protein localises to the plastid. It is found in the chloroplast. It catalyses the reaction 2 (2R)-3-phosphoglycerate + 2 H(+) = D-ribulose 1,5-bisphosphate + CO2 + H2O. The enzyme catalyses D-ribulose 1,5-bisphosphate + O2 = 2-phosphoglycolate + (2R)-3-phosphoglycerate + 2 H(+). RuBisCO catalyzes two reactions: the carboxylation of D-ribulose 1,5-bisphosphate, the primary event in carbon dioxide fixation, as well as the oxidative fragmentation of the pentose substrate in the photorespiration process. Both reactions occur simultaneously and in competition at the same active site. This is Ribulose bisphosphate carboxylase large chain from Liquidambar styraciflua (Sweetgum tree).